Here is a 190-residue protein sequence, read N- to C-terminus: Elongation factor P-like protein (190 aa).

This sequence belongs to the elongation factor P family.

The protein is Elongation factor P-like protein of Erwinia tasmaniensis (strain DSM 17950 / CFBP 7177 / CIP 109463 / NCPPB 4357 / Et1/99).